A 584-amino-acid chain; its full sequence is Protein spire homolog 1 (584 aa).

The segment at 1-30 (MANTVEADGSNDEGYEAAEEGPEDEEDEKR) is disordered. The region spanning 1–73 (MANTVEADGS…RALFAETMEL (73 aa)) is the KIND domain. The segment covering 9–28 (GSNDEGYEAAEEGPEDEEDE) has biased composition (acidic residues). Residues 71 to 99 (MELHTFLAKVKSAKENLKKIQEMEKSDES) adopt a coiled-coil conformation. WH2 domains lie at 147–165 (PYEM…LRKV) and 211–228 (LHER…LRPV). The segment covering 224–238 (KLRPVSPEEIRRSRL) has biased composition (basic and acidic residues). The interval 224 to 366 (KLRPVSPEEI…PTNVRQFLPP (143 aa)) is disordered. S229 bears the Phosphoserine mark. Residues 242-272 (TPESTKNLMESSMVNGGLTSQTKENGLSSAE) are compositionally biased toward polar residues. 3 positions are modified to phosphoserine: S292, S293, and S295. The span at 302 to 320 (KSTSSSSVSPSFPEEPVLE) shows a compositional bias: low complexity. Position 337 is a phosphothreonine (T337). Over residues 340-356 (PERRQPPQRRHSIEKET) the composition is skewed to basic and acidic residues. Polar residues predominate over residues 357–366 (PTNVRQFLPP). Residues 384–404 (LALTVEEVMHIRQVLVKAELE) are spir-box. 3 positions are modified to phosphoserine: S506, S510, and S563.

This sequence belongs to the spire family. As to quaternary structure, interacts with FMN2.

Its subcellular location is the cytoplasm. The protein resides in the cytoskeleton. It is found in the cytosol. It localises to the cleavage furrow. The protein localises to the perinuclear region. Its subcellular location is the cell membrane. The protein resides in the cytoplasmic vesicle membrane. Acts as an actin nucleation factor, remains associated with the slow-growing pointed end of the new filament. Involved in intracellular vesicle transport along actin fibers, providing a novel link between actin cytoskeleton dynamics and intracellular transport. Required for asymmetric spindle positioning and asymmetric cell division during meiosis. Required for normal formation of the cleavage furrow and for polar body extrusion during female germ cell meiosis. Also acts in the nucleus: together with FMN2, promotes assembly of nuclear actin filaments in response to DNA damage in order to facilitate movement of chromatin and repair factors after DNA damage. In addition, promotes innate immune signaling downstream of dsRNA sensing. Mechanistically, contributes to IRF3 phosphorylation and activation downstream of MAVS and upstream of TBK1. This chain is Protein spire homolog 1 (SPIRE1), found in Macaca fascicularis (Crab-eating macaque).